The primary structure comprises 342 residues: MTQLTITRPDDWHVHLRDGEVLKDTVRDISRYNGRALIMPNTIPPVTDTEMALAYRERIMAEQPSEQFQPLMALYLTDNTTPDEIRKAKESGAVVAAKLYPAGATTNSDSGVTSAQKIYHVLEAMQEVGMLLLVHGEVTAHDVDIFDREKEFLDTVLAPIVNDFPNLKIVLEHITTADAATFVKNANENVAATITAHHLLYNRNHMLVGGIKPHFYCLPILKRNTHQLALIEAATSGSKKFFLGTDSAPHAKGAKESACGCAGSYTAHAAVELYAEVFDLEGKIENLEAFASHNGPDFYGMPRNADTITLVKEEWNVAETMPFGSDIVVPIRGGETIAWAVK.

Zn(2+)-binding residues include His-13 and His-15. Residues 15–17 (HLR) and Asn-41 contribute to the substrate site. Zn(2+) is bound by residues Lys-98, His-135, and His-173. Position 98 is an N6-carboxylysine (Lys-98). His-135 is a substrate binding site. Leu-218 lines the substrate pocket. Asp-246 serves as a coordination point for Zn(2+). Asp-246 is a catalytic residue. Positions 250 and 262 each coordinate substrate.

The protein belongs to the metallo-dependent hydrolases superfamily. DHOase family. Class II DHOase subfamily. Homodimer. Requires Zn(2+) as cofactor.

The catalysed reaction is (S)-dihydroorotate + H2O = N-carbamoyl-L-aspartate + H(+). Its pathway is pyrimidine metabolism; UMP biosynthesis via de novo pathway; (S)-dihydroorotate from bicarbonate: step 3/3. In terms of biological role, catalyzes the reversible cyclization of carbamoyl aspartate to dihydroorotate. The polypeptide is Dihydroorotase (Vibrio atlanticus (strain LGP32) (Vibrio splendidus (strain Mel32))).